The chain runs to 209 residues: Na(+)-translocating NADH-quinone reductase subunit D (209 aa).

The next 5 helical transmembrane spans lie at 42–62, 72–92, 103–123, 131–151, and 178–198; these read LVMT…ISLI, IIVQ…ILQA, VFVG…AYAM, FMDG…VGFL, and NGLF…IWGL.

It belongs to the NqrDE/RnfAE family. As to quaternary structure, composed of six subunits; NqrA, NqrB, NqrC, NqrD, NqrE and NqrF.

The protein localises to the cell inner membrane. The enzyme catalyses a ubiquinone + n Na(+)(in) + NADH + H(+) = a ubiquinol + n Na(+)(out) + NAD(+). In terms of biological role, NQR complex catalyzes the reduction of ubiquinone-1 to ubiquinol by two successive reactions, coupled with the transport of Na(+) ions from the cytoplasm to the periplasm. NqrA to NqrE are probably involved in the second step, the conversion of ubisemiquinone to ubiquinol. This Photorhabdus laumondii subsp. laumondii (strain DSM 15139 / CIP 105565 / TT01) (Photorhabdus luminescens subsp. laumondii) protein is Na(+)-translocating NADH-quinone reductase subunit D.